Here is a 396-residue protein sequence, read N- to C-terminus: Probable tRNA sulfurtransferase (396 aa).

The THUMP domain occupies 63 to 166 (AAAARASARV…GRRAYFFDTI (104 aa)). ATP-binding positions include 184-185 (LY), arginine 266, glycine 288, and glutamine 297.

Belongs to the ThiI family.

Its subcellular location is the cytoplasm. It catalyses the reaction [ThiI sulfur-carrier protein]-S-sulfanyl-L-cysteine + a uridine in tRNA + 2 reduced [2Fe-2S]-[ferredoxin] + ATP + H(+) = [ThiI sulfur-carrier protein]-L-cysteine + a 4-thiouridine in tRNA + 2 oxidized [2Fe-2S]-[ferredoxin] + AMP + diphosphate. The enzyme catalyses [ThiS sulfur-carrier protein]-C-terminal Gly-Gly-AMP + S-sulfanyl-L-cysteinyl-[cysteine desulfurase] + AH2 = [ThiS sulfur-carrier protein]-C-terminal-Gly-aminoethanethioate + L-cysteinyl-[cysteine desulfurase] + A + AMP + 2 H(+). It functions in the pathway cofactor biosynthesis; thiamine diphosphate biosynthesis. Its function is as follows. Catalyzes the ATP-dependent transfer of a sulfur to tRNA to produce 4-thiouridine in position 8 of tRNAs, which functions as a near-UV photosensor. Also catalyzes the transfer of sulfur to the sulfur carrier protein ThiS, forming ThiS-thiocarboxylate. This is a step in the synthesis of thiazole, in the thiamine biosynthesis pathway. The sulfur is donated as persulfide by IscS. The protein is Probable tRNA sulfurtransferase of Aeropyrum pernix (strain ATCC 700893 / DSM 11879 / JCM 9820 / NBRC 100138 / K1).